The primary structure comprises 76 residues: Putative snRNP Sm-like protein (76 aa).

Residues Arg-4–Gly-76 enclose the Sm domain.

Belongs to the snRNP Sm proteins family.

The polypeptide is Putative snRNP Sm-like protein (Pyrococcus furiosus (strain ATCC 43587 / DSM 3638 / JCM 8422 / Vc1)).